The following is a 183-amino-acid chain: Ferredoxin-2, mitochondrial (183 aa).

The N-terminal 52 residues, 1–52 (MAASMARGGVSARVLLQAARGTWWNRPGGTSGSGEGVALGTTRKFQATGSRP), are a transit peptide targeting the mitochondrion. The segment at 45–65 (FQATGSRPAGEEDAGGPERPG) is disordered. The 2Fe-2S ferredoxin-type domain maps to 68 to 170 (VNVVFVDRSG…GAEFTLPKIT (103 aa)). Cysteine 105, cysteine 111, cysteine 114, and cysteine 151 together coordinate [2Fe-2S] cluster.

Belongs to the adrenodoxin/putidaredoxin family. Component of the mitochondrial core iron-sulfur cluster (ISC) complex composed of NFS1, LYRM4, NDUFAB1, ISCU, FXN, and FDX2; this complex is a heterohexamer containing two copies of each monomer. Form a heterodimer complex with NFS1. Interacts (in both their reduced and oxidized states) with the cysteine desulfurase complex; this interaction stimulates cysteine desulfurase activity, and serves as a reductant for Fe-S cluster assembly. It depends on [2Fe-2S] cluster as a cofactor. As to expression, widely expressed, with highest levels in testis, kidney and brain (at protein level). Expressed in muscle (at protein level). Expressed in fibroblasts (at protein level).

It localises to the mitochondrion. The protein localises to the mitochondrion matrix. Electron donor, of the core iron-sulfur cluster (ISC) assembly complex, that acts to reduce the persulfide into sulfide during [2Fe-2S] clusters assembly on the scaffolding protein ISCU. The core iron-sulfur cluster (ISC) assembly complex is involved in the de novo synthesis of a [2Fe-2S] cluster, the first step of the mitochondrial iron-sulfur protein biogenesis. This process is initiated by the cysteine desulfurase complex (NFS1:LYRM4:NDUFAB1) that produces persulfide which is delivered on the scaffold protein ISCU in a FXN-dependent manner. Then this complex is stabilized by FDX2 which provides reducing equivalents to accomplish the [2Fe-2S] cluster assembly. Finally, the [2Fe-2S] cluster is transferred from ISCU to chaperone proteins, including HSCB, HSPA9 and GLRX5. Essential for coenzyme Q biosynthesis: together with FDXR, transfers the electrons required for the hydroxylation reaction performed by COQ6. This is Ferredoxin-2, mitochondrial from Homo sapiens (Human).